The chain runs to 346 residues: Phosphate acyltransferase (346 aa).

It belongs to the PlsX family. Homodimer. Probably interacts with PlsY.

It is found in the cytoplasm. It carries out the reaction a fatty acyl-[ACP] + phosphate = an acyl phosphate + holo-[ACP]. Its pathway is lipid metabolism; phospholipid metabolism. Its function is as follows. Catalyzes the reversible formation of acyl-phosphate (acyl-PO(4)) from acyl-[acyl-carrier-protein] (acyl-ACP). This enzyme utilizes acyl-ACP as fatty acyl donor, but not acyl-CoA. This chain is Phosphate acyltransferase, found in Brucella melitensis biotype 2 (strain ATCC 23457).